Consider the following 981-residue polypeptide: RNA polymerase II assembly factor RTP1 (981 aa).

9 HEAT repeats span residues 64–101, 161–199, 226–261, 366–403, 609–646, 655–692, 765–799, 800–836, and 945–980; these read SNNNEFVAVLLQKFQNLHIHVLEQQRRLIESKSDLLPI, DTLSQVITVFYNVLTSERSSDYLREIISKGSAYANILLG, YTLFGVYTLLVETIQDEKVREPILSKLTTLTLRRPE, KELNDVINVLISLSKNSSSDLLNDLVTSCPDEDGTTPG, KDVLIVIDQLIDVVQEKDETIQEVEADSDDEVEEGEET, SSYKIILQLLSTVLSESSSSILLQNSYILKSISRKLQS, ISLEKVLQIHLDYLKNMDPFIYLNVIKGLTTLCEL, EPETILPLLAEFYANKKKKNRLDDVLKVGEVFINYIQ, and EYNYDKLKTLLSYVRDQDEDYMVCEQIDKLLTVLDS. Residues 630–651 are compositionally biased toward acidic residues; sequence QEVEADSDDEVEEGEETEELDP. A disordered region spans residues 630–652; the sequence is QEVEADSDDEVEEGEETEELDPN.

Belongs to the Tango6 family. In terms of assembly, interacts with RNA polymerase II subunits RPB2 and RPB3. Interacts with the R2TP complex. Interacts with the nuclear pore complex subunits NUP100 and NUP116.

The protein resides in the cytoplasm. Required for the cytoplasmic assembly and the nuclear import of RNA polymerase II. May facilitate the starting interaction between RNA polymerase II subunits RPB2 and RPB3 and the subsequent interaction of the resulting complex with subunit RPB1. May also participate in the transport of RNA polymerase II through the nuclear pore complex. The sequence is that of RNA polymerase II assembly factor RTP1 from Saccharomyces cerevisiae (strain ATCC 204508 / S288c) (Baker's yeast).